We begin with the raw amino-acid sequence, 509 residues long: MVKVPHLLVATFGVLLVLNGCLARQSLGVPPQLGNACNLDNLDVLQPTETIKSEAGRVEYWDHNNPQIRCAGVSVSRVIIEQGGLYLPTFFSSPKISYVVQGMGISGRVVPGCAETFMDSQPMQGQQQGQPWQGQQGQQGQQGQQGQQGQQGQQGQQGQQGQQGQQGQQQQGFRDMHQKVEHVRHGDIIAITAGSSHWIYNTGDQPLVIICLLDIANYQNQLDRNPRTFRLAGNNPQGGSQQQQQQQQNMLSGFDPQVLAQALKIDVRLAQELQNQQDSRGNIVRVKGPFQVVRPPLRQPYESEQWRHPRGPPQSPQDNGLEETICSMRTHENIDDPARADVYKPNLGRVTSVNSYTLPILQYIRLSATRGILQGNAMVLPKYNMNANEILYCTQGQARIQVVNDNGQNVLDQQVQKGQLVVIPQGFAYVVQSHQNNFEWISFKTNANAMVSTLAGRTSALRALPLEVITNAFQISLEEARRIKFNTLETTLTRARGGQPQLIEEIVEA.

Residues 1 to 23 (MVKVPHLLVATFGVLLVLNGCLA) form the signal peptide. A disulfide bridge connects residues cysteine 37 and cysteine 70. In terms of domain architecture, Cupin type-1 1 spans 42 to 271 (LDVLQPTETI…ALKIDVRLAQ (230 aa)). Serine 53 and serine 97 each carry phosphoserine. A disulfide bridge links cysteine 113 with cysteine 326. A Phosphothreonine modification is found at threonine 116. Disordered stretches follow at residues 119–175 (DSQP…GFRD), 230–249 (RLAG…QQQN), and 301–321 (YESE…DNGL). Residues 124–172 (QGQQQGQPWQGQQGQQGQQGQQGQQGQQGQQGQQGQQGQQGQQGQQQQG) show a composition bias toward low complexity. In terms of domain architecture, Cupin type-1 2 spans 332–481 (ENIDDPARAD…AFQISLEEAR (150 aa)). Position 352 is a phosphoserine (serine 352). 2 positions are modified to phosphothreonine: threonine 445 and threonine 487.

This sequence belongs to the 11S seed storage protein (globulins) family. As to quaternary structure, hexamer; each subunit is composed of an acidic and a basic chain derived from a single precursor and linked by a disulfide bond.

Functionally, this is a seed storage protein. The polypeptide is Cruciferin CRU1 (CRU1) (Brassica napus (Rape)).